The chain runs to 243 residues: 2,3-bisphosphoglycerate-dependent phosphoglycerate mutase (243 aa).

Substrate is bound by residues 8-15 (RHGQSEWN), 21-22 (TG), Arg-60, 87-90 (ERHY), Lys-98, 114-115 (RR), and 183-184 (GN). Residue His-9 is the Tele-phosphohistidine intermediate of the active site. Glu-87 functions as the Proton donor/acceptor in the catalytic mechanism.

Belongs to the phosphoglycerate mutase family. BPG-dependent PGAM subfamily. Homodimer.

The catalysed reaction is (2R)-2-phosphoglycerate = (2R)-3-phosphoglycerate. It participates in carbohydrate degradation; glycolysis; pyruvate from D-glyceraldehyde 3-phosphate: step 3/5. In terms of biological role, catalyzes the interconversion of 2-phosphoglycerate and 3-phosphoglycerate. The polypeptide is 2,3-bisphosphoglycerate-dependent phosphoglycerate mutase (Maricaulis maris (strain MCS10) (Caulobacter maris)).